A 122-amino-acid chain; its full sequence is Large ribosomal subunit protein bL12 (122 aa).

This sequence belongs to the bacterial ribosomal protein bL12 family. Homodimer. Part of the ribosomal stalk of the 50S ribosomal subunit. Forms a multimeric L10(L12)X complex, where L10 forms an elongated spine to which 2 to 4 L12 dimers bind in a sequential fashion. Binds GTP-bound translation factors.

In terms of biological role, forms part of the ribosomal stalk which helps the ribosome interact with GTP-bound translation factors. Is thus essential for accurate translation. This chain is Large ribosomal subunit protein bL12, found in Buchnera aphidicola subsp. Cinara cedri (strain Cc).